The chain runs to 255 residues: Type III pantothenate kinase (255 aa).

12 to 19 contacts ATP; sequence DIGNSYTK. 109 to 112 provides a ligand contact to substrate; the sequence is GDDL. The Proton acceptor role is filled by Asp111. Thr133 is an ATP binding site. Thr185 is a substrate binding site.

It belongs to the type III pantothenate kinase family. Homodimer. The cofactor is NH4(+). Requires K(+) as cofactor.

The protein localises to the cytoplasm. It catalyses the reaction (R)-pantothenate + ATP = (R)-4'-phosphopantothenate + ADP + H(+). The protein operates within cofactor biosynthesis; coenzyme A biosynthesis; CoA from (R)-pantothenate: step 1/5. Functionally, catalyzes the phosphorylation of pantothenate (Pan), the first step in CoA biosynthesis. The chain is Type III pantothenate kinase from Malacoplasma penetrans (strain HF-2) (Mycoplasma penetrans).